Here is a 234-residue protein sequence, read N- to C-terminus: Sugar fermentation stimulation protein A (234 aa).

The segment at residues 201-220 (LLSEAQNKGVEVLAYKAELS) is a DNA-binding region (H-T-H motif).

It belongs to the SfsA family.

Its function is as follows. Binds to DNA non-specifically. Could be a regulatory factor involved in maltose metabolism. The chain is Sugar fermentation stimulation protein A from Salmonella agona (strain SL483).